Here is a 650-residue protein sequence, read N- to C-terminus: Probable acyl-CoA dehydrogenase FadE10 (650 aa).

Positions Met1 to Gly23 are disordered. The segment covering Glu10–Gly23 has biased composition (basic and acidic residues). Glu422 acts as the Proton acceptor in catalysis.

The protein belongs to the acyl-CoA dehydrogenase family. Requires FAD as cofactor.

It catalyses the reaction a 2,3-saturated acyl-CoA + A = a 2,3-dehydroacyl-CoA + AH2. The sequence is that of Probable acyl-CoA dehydrogenase FadE10 (fadE10) from Mycobacterium tuberculosis (strain CDC 1551 / Oshkosh).